The sequence spans 469 residues: tRNA(Ile)-lysidine synthase (469 aa).

26–31 (SGGPDS) serves as a coordination point for ATP.

It belongs to the tRNA(Ile)-lysidine synthase family.

It is found in the cytoplasm. The catalysed reaction is cytidine(34) in tRNA(Ile2) + L-lysine + ATP = lysidine(34) in tRNA(Ile2) + AMP + diphosphate + H(+). Its function is as follows. Ligates lysine onto the cytidine present at position 34 of the AUA codon-specific tRNA(Ile) that contains the anticodon CAU, in an ATP-dependent manner. Cytidine is converted to lysidine, thus changing the amino acid specificity of the tRNA from methionine to isoleucine. In Clostridium perfringens (strain ATCC 13124 / DSM 756 / JCM 1290 / NCIMB 6125 / NCTC 8237 / Type A), this protein is tRNA(Ile)-lysidine synthase.